The primary structure comprises 244 residues: Cobalt transport protein CbiM (244 aa).

The N-terminal stretch at 1–20 (MRKITFIAALLSLLPRYALA) is a signal peptide. 6 helical membrane-spanning segments follow: residues 31 to 51 (KWCLLWYSIYIPFLMAGLIYI), 63 to 83 (ILLGFAGAFVFALSALKLPSV), 95 to 115 (LGAILLGPLPMAVIGGIVLLF), 117 to 137 (ALLLAHGGITTLGANAFSMAV), 161 to 181 (VFLGAASGDLMTYIITSLQLA), and 201 to 221 (IFAVTQLPLAIGEGILTVIVL).

Belongs to the CbiM family. As to quaternary structure, forms an energy-coupling factor (ECF) transporter complex composed of an ATP-binding protein (A component, CbiO), a transmembrane protein (T component, CbiQ) and 2 possible substrate-capture proteins (S components, CbiM and CbiN) of unknown stoichimetry.

It localises to the cell membrane. Its pathway is cofactor biosynthesis; adenosylcobalamin biosynthesis. Functionally, part of the energy-coupling factor (ECF) transporter complex CbiMNOQ involved in cobalt import. The sequence is that of Cobalt transport protein CbiM from Thermosediminibacter oceani (strain ATCC BAA-1034 / DSM 16646 / JW/IW-1228P).